The sequence spans 874 residues: MLKKFDKKDEESGGGSNPFQHLEKSAVLQEARVFNETPINPRKCAHILTKILYLINQGEHLGTTEATEAFFAMTKLFQSNDPTLRRMCYLTIKEMSCIAEDVIIVTSSLTKDMTGKEDNYRGPAVRALCQITDSTMLQAIERYMKQAIVDKVPSVSSSALVSSLHLLKCSFDVVKRWVNEAQEAASSDNIMVQYHALGLLYHVRKNDRLAVNKMISKVTRHGLKSPFAYCMMIRVASKQLEEEDGSRDSPLFDFIESCLRNKHEMVVYEAASAIVNLPGCSAKELAPAVSVLQLFCSSPKAALRYAAVRTLNKVAMKHPSAVTACNLDLENLVTDSNRSIATLAITTLLKTGSESSIDRLMKQISSFMSEISDEFKVVVVQAISALCQKYPRKHAVLMNFLFTMLREEGGFEYKRAIVDCIISIIEENSESKETGLSHLCEFIEDCEFTVLATRILHLLGQEGPKTTNPSKYIRFIYNRVVLEHEEVRAGAVSALAKFGAQNEEMLPSILVLLKRCVMDDDNEVRDRATFYLNVLEQKQKALNAGYILNGLTVSIPGLERALQQYTLEPSEKPFDLKSVPLATAPMAEQRTESTPITAVKQPEKVAATRQEIFQEQLAAVPEFRGLGPLFKSSPEPVALTESETEYVIRCTKHTFTNHMVFQFDCTNTLNDQTLENVTVQMEPTEAYEVLCYVPARSLPYNQPGTCYTLVALPKEDPTAVACTFSCMMKFTVKDCDPTTGETDDEGYEDEYVLEDLEVTVADHIQKVMKLNFEAAWDEVGDEFEKEETFTLSTIKTLEEAVGNIVKFLGMHPCERSDKVPDNKNTHTLLLAGVFRGGHDILVRSRLLLLDTVTMQVTARSLEELPVDIILASVG.

Residues 1–11 are compositionally biased toward basic and acidic residues; it reads MLKKFDKKDEE. The disordered stretch occupies residues 1-21; the sequence is MLKKFDKKDEESGGGSNPFQH. HEAT repeat units follow at residues 64–101, 283–320, 322–355, and 356–392; these read TEAT…IAED, KELA…KHPS, VTAC…GSES, and SIDR…KYPR. Thr-594 carries the phosphothreonine modification. The segment at 609 to 874 is interaction with ZNF289/ARFGAP2; the sequence is RQEIFQEQLA…PVDIILASVG (266 aa).

The protein belongs to the COPG family. Oligomeric complex that consists of at least the alpha, beta, beta', gamma, delta, epsilon and zeta subunits. Interacts with ZNF289/ARFGAP2 through its C-terminal appendage domain. Interacts with EGFR upon EGF treatment; interaction is essential for regulation of EGF-dependent nuclear transport of EGFR by retrograde trafficking from the Golgi to the ER. The coatomer interacts with KDEL receptors; the interaction is important for retrograde trafficking of KDEL-bearing proteins from the Golgi to the endoplasmic reticulum. Interacts with COPB1. Interacts with TMED10 (via C-terminus). Interacts with TMED2, TMED3, TMED7 and TMED9.

Its subcellular location is the cytoplasm. It is found in the golgi apparatus membrane. It localises to the cytoplasmic vesicle. The protein resides in the COPI-coated vesicle membrane. Functionally, the coatomer is a cytosolic protein complex that binds to dilysine motifs and reversibly associates with Golgi non-clathrin-coated vesicles, which further mediate biosynthetic protein transport from the ER, via the Golgi up to the trans Golgi network. Coatomer complex is required for budding from Golgi membranes, and is essential for the retrograde Golgi-to-ER transport of dilysine-tagged proteins. In mammals, the coatomer can only be recruited by membranes associated to ADP-ribosylation factors (ARFs), which are small GTP-binding proteins; the complex also influences the Golgi structural integrity, as well as the processing, activity, and endocytic recycling of LDL receptors. Required for limiting lipid storage in lipid droplets. Involved in lipid homeostasis by regulating the presence of perilipin family members PLIN2 and PLIN3 at the lipid droplet surface and promoting the association of adipocyte triglyceride lipase (PNPLA2) with the lipid droplet surface to mediate lipolysis. This Homo sapiens (Human) protein is Coatomer subunit gamma-1 (COPG1).